Consider the following 231-residue polypeptide: Tol-Pal system protein TolQ (231 aa).

3 helical membrane-spanning segments follow: residues 20–40, 134–154, and 176–196; these read IVVQ…WIMI, FLAT…VWGI, and IAEA…AVIA.

Belongs to the ExbB/TolQ family. As to quaternary structure, the Tol-Pal system is composed of five core proteins: the inner membrane proteins TolA, TolQ and TolR, the periplasmic protein TolB and the outer membrane protein Pal. They form a network linking the inner and outer membranes and the peptidoglycan layer.

The protein resides in the cell inner membrane. Part of the Tol-Pal system, which plays a role in outer membrane invagination during cell division and is important for maintaining outer membrane integrity. The protein is Tol-Pal system protein TolQ of Pseudomonas aeruginosa (strain ATCC 15692 / DSM 22644 / CIP 104116 / JCM 14847 / LMG 12228 / 1C / PRS 101 / PAO1).